The primary structure comprises 53 residues: Bowman-Birk type proteinase inhibitor II-4 (53 aa).

Disulfide bonds link C8-C23, C13-C21, C30-C37, and C34-C49.

This sequence belongs to the Bowman-Birk serine protease inhibitor family.

The polypeptide is Bowman-Birk type proteinase inhibitor II-4 (Triticum aestivum (Wheat)).